Here is a 513-residue protein sequence, read N- to C-terminus: ETS translocation variant 3 (513 aa).

Positions 35 to 116 (IQLWHFILEL…KGKRFTYKFN (82 aa)) form a DNA-binding region, ETS. The tract at residues 138 to 202 (QSAPPVPTAS…DLEDGSASDW (65 aa)) is disordered. A phosphoserine mark is found at S139, S159, and S315. Positions 333–513 (QMHPEEPSQF…ATTATAAADA (181 aa)) are disordered. 3 stretches are compositionally biased toward basic and acidic residues: residues 357-366 (ERVESREEAV), 380-392 (IKVE…DPDS), and 399-419 (GKEE…EEGK). A Glycyl lysine isopeptide (Lys-Gly) (interchain with G-Cter in SUMO2) cross-link involves residue K381. K388 is modified (N6-acetyllysine; alternate). K388 participates in a covalent cross-link: Glycyl lysine isopeptide (Lys-Gly) (interchain with G-Cter in SUMO2); alternate. Over residues 430 to 439 (WPSVSISTPS) the composition is skewed to polar residues. The segment covering 441–450 (EPLEGTEDSE) has biased composition (acidic residues). 2 stretches are compositionally biased toward basic and acidic residues: residues 451–466 (DRSV…KEDA) and 477–489 (RWND…ELNK). The segment covering 504–513 (ATTATAAADA) has biased composition (low complexity).

This sequence belongs to the ETS family.

It localises to the nucleus. Transcriptional repressor that contribute to growth arrest during terminal macrophage differentiation by repressing target genes involved in Ras-dependent proliferation. Represses MMP1 promoter activity. The chain is ETS translocation variant 3 (Etv3) from Mus musculus (Mouse).